Reading from the N-terminus, the 82-residue chain is Photosystem I iron-sulfur center (82 aa).

4Fe-4S ferredoxin-type domains lie at 2-31 (SHTV…MVPW) and 37-68 (GQIA…VRVY). [4Fe-4S] cluster is bound by residues Cys-11, Cys-14, Cys-17, Cys-21, Cys-48, Cys-51, Cys-54, and Cys-58.

As to quaternary structure, the eukaryotic PSI reaction center is composed of at least 11 subunits. [4Fe-4S] cluster is required as a cofactor.

The protein localises to the plastid. It localises to the chloroplast thylakoid membrane. The catalysed reaction is reduced [plastocyanin] + hnu + oxidized [2Fe-2S]-[ferredoxin] = oxidized [plastocyanin] + reduced [2Fe-2S]-[ferredoxin]. Functionally, apoprotein for the two 4Fe-4S centers FA and FB of photosystem I (PSI); essential for photochemical activity. FB is the terminal electron acceptor of PSI, donating electrons to ferredoxin. The C-terminus interacts with PsaA/B/D and helps assemble the protein into the PSI complex. Required for binding of PsaD and PsaE to PSI. PSI is a plastocyanin/cytochrome c6-ferredoxin oxidoreductase, converting photonic excitation into a charge separation, which transfers an electron from the donor P700 chlorophyll pair to the spectroscopically characterized acceptors A0, A1, FX, FA and FB in turn. In Trieres chinensis (Marine centric diatom), this protein is Photosystem I iron-sulfur center.